We begin with the raw amino-acid sequence, 373 residues long: Transaminase AMT5 (373 aa).

Residue R92 coordinates pyridoxal 5'-phosphate. At K196 the chain carries N6-(pyridoxal phosphate)lysine. A pyridoxal 5'-phosphate-binding site is contributed by E232.

This sequence belongs to the class-IV pyridoxal-phosphate-dependent aminotransferase family. It depends on pyridoxal 5'-phosphate as a cofactor.

Its pathway is mycotoxin biosynthesis. Transaminase; part of the gene clusters that mediate the biosynthesis of AM-toxins, host-selective toxins (HSTs) causing Alternaria blotch on apple, a worldwide distributed disease. AM-toxins are cyclic depsipeptides containing the 3 residues 2-hydroxy-isovaleric acid (2-HIV), dehydroalanine, L-alanine which are common for all 3 AM-toxins I to III. The fourth precursor is L-alpha-amino-methoxyphenyl-valeric acid (L-Amv) for AM-toxin I, L-alpha-amino-phenyl-valeric acid (L-Apv) for AM-toxin II, and L-alpha-amino-hydroxyphenyl-valeric acid (L-Ahv) for AM-toxin III. AM-toxins have two target sites for affecting susceptible apple cells; they cause invagination of the plasma membrane and electrolyte loss and chloroplast disorganization. The non-ribosomal peptide synthetase AMT1 contains 4 catalytic modules and is responsible for activation of each residue in AM-toxin. The aldo-keto reductase AMT2 catalyzes the conversion of 2-keto-isovaleric acid (2-KIV) to 2-hydroxy-isovaleric acid (2-HIV), one of the precursor residues incorporated by AMT1 during AM-toxin biosynthesis, by reduction of its ketone to an alcohol. The cytochrome P450 monooxygenase AMT3 and the thioesterase AMT4 are also important for AM-toxin production, but their exact function within the AM-toxin biosynthesis are not known yet. Up to 21 proteins (including AMT1 to AMT4) are predicted to be involved in AM-toxin biosynthesis since their expression is highly up-regulated in AM-toxin-producing cultures. In Alternaria alternata (Alternaria rot fungus), this protein is Transaminase AMT5.